Reading from the N-terminus, the 88-residue chain is Kunitz-type U15-theraphotoxin-Hhn1q (88 aa).

The signal sequence occupies residues 1–27 (MGIARILSAVLFLSVLFVVTFPTLLSA). Residues 28-33 (DHHDGR) constitute a propeptide that is removed on maturation. Positions 37 to 85 (CRLPSDRGRCKASFERWYFNGTTCTKFVYGGYGGNDNRFPTEKACMERC) constitute a BPTI/Kunitz inhibitor domain. 2 disulfides stabilise this stretch: cysteine 37–cysteine 85 and cysteine 60–cysteine 81.

Belongs to the venom Kunitz-type family. 01 (intermediate) subfamily. As to expression, expressed by the venom gland.

It localises to the secreted. Its function is as follows. Serine protease inhibitor that inhibits trypsin at a molar ratio of 1:1. The polypeptide is Kunitz-type U15-theraphotoxin-Hhn1q (Cyriopagopus hainanus (Chinese bird spider)).